The chain runs to 377 residues: Ribosomal RNA large subunit methyltransferase G (377 aa).

The protein belongs to the methyltransferase superfamily. RlmG family.

The protein localises to the cytoplasm. The enzyme catalyses guanosine(1835) in 23S rRNA + S-adenosyl-L-methionine = N(2)-methylguanosine(1835) in 23S rRNA + S-adenosyl-L-homocysteine + H(+). In terms of biological role, specifically methylates the guanine in position 1835 (m2G1835) of 23S rRNA. This chain is Ribosomal RNA large subunit methyltransferase G, found in Shewanella sp. (strain ANA-3).